A 620-amino-acid chain; its full sequence is MDSHTLIQALIYLGSAALIVPIAVRLGLGSVLGYLIAGCIIGPWGLRLVTDAESILHFAEIGVVLMLFIIGLELDPQRLWKLRAAVFGGGALQMVICGGLLGLFCMLLGLRWQVAELIGMTLALSSTAIAMQAMNERNLMVTQMGRSAFAVLLFQDIAAIPLVAMIPLLVASSASTTMGAFALSALKVAGALVLVVLLGRYVTRPALRFVARSGLREVFSAVALFLVFGFGLLLEEVGLSMAMGAFLAGVLLASSEYRHALESDIEPFKGLLLGLFFIGVGMSIDFGTLLENPLRIVILLLGFLIIKIAMLWLIARPLQVPNKQRRWFAVLLGQGSEFAFVVFGAAQMANVLEPEWAKSLTLAVALSMAATPILLVILNRLEQSSTEEAREADEIDEEQPRVIIAGFGRFGQITGRLLLSSGVKMVVLDHDPDHIETLRKFGMKVFYGDATRMDLLESAGAAKAEVLINAIDDPQTNLQLTEMVKEHFPHLQIIARARDVDHYIRLRQAGVEKPERETFEGALKTGRLALESLGLGPYEARERADVFRRFNIQMVEEMAMVENDTKARAAVYKRTSAMLSEIITEDREHLSLIQRHGWQGTEEGKHTGNMADEPETKPSS.

Transmembrane regions (helical) follow at residues 4–24, 26–46, 54–74, 90–110, 114–134, 149–169, 178–198, 218–238, 270–290, 294–314, 327–347, and 359–379; these read HTLI…PIAV, LGLG…PWGL, SILH…GLEL, GALQ…LLGL, VAEL…MQAM, FAVL…IPLL, MGAF…VVLL, VFSA…EEVG, GLLL…GTLL, LRIV…LWLI, WFAV…GAAQ, and SLTL…VILN. The region spanning 399–518 is the RCK N-terminal domain; the sequence is QPRVIIAGFG…AGVEKPERET (120 aa). The interval 597–620 is disordered; it reads GWQGTEEGKHTGNMADEPETKPSS.

This sequence belongs to the monovalent cation:proton antiporter 2 (CPA2) transporter (TC 2.A.37) family. KefC subfamily. Homodimer. Interacts with the regulatory subunit KefF.

It localises to the cell inner membrane. Its function is as follows. Pore-forming subunit of a potassium efflux system that confers protection against electrophiles. Catalyzes K(+)/H(+) antiport. The chain is Glutathione-regulated potassium-efflux system protein KefC from Escherichia coli O7:K1 (strain IAI39 / ExPEC).